The chain runs to 184 residues: Guanylate kinase (184 aa).

A Guanylate kinase-like domain is found at 5-183; sequence KKLIIITGPS…TVKEVLKIIK (179 aa). 12 to 19 provides a ligand contact to ATP; the sequence is GPSGVGKG.

Belongs to the guanylate kinase family.

The protein resides in the cytoplasm. The enzyme catalyses GMP + ATP = GDP + ADP. Its function is as follows. Essential for recycling GMP and indirectly, cGMP. The chain is Guanylate kinase from Prochlorococcus marinus subsp. pastoris (strain CCMP1986 / NIES-2087 / MED4).